Reading from the N-terminus, the 322-residue chain is MLQGHERSITQIKYNREGDLLFSCSKDQKPNVWYSLNGERLGTYDGHQGAVWCLDVDWESRKLITGAGDMTTKIWDVEYGTVIASIPTKSSVRTSNFSFSGNQAAYSTDKAMGQSCELFLIDVRNADSSLSEQEPTLRIPMTESKITSMLWGPLDETIITGHDNGNIAIWDIRKGQKVVDSGTDHSAGINDMQLSKDGTMFVTASKDTTAKLFDSESLMCLKSYKTERPVNSAAISPILDHVVLGGGQDAMEVTTTSTKAGKFDSRFFHLIYEEEFARLKGHFGPINSLAFHPDGKSYASGGEDGFVRVQTFDSTYFENIFE.

WD repeat units follow at residues 4 to 43 (GHERSITQIKYNREGDLLFSCSKDQKPNVWYSLNGERLGT), 46 to 85 (GHQGAVWCLDVDWESRKLITGAGDMTTKIWDVEYGTVIAS), 141 to 180 (MTESKITSMLWGPLDETIITGHDNGNIAIWDIRKGQKVVD), 184 to 223 (DHSAGINDMQLSKDGTMFVTASKDTTAKLFDSESLMCLKS), and 281 to 322 (GHFG…NIFE).

This sequence belongs to the eIF-3 subunit I family. As to quaternary structure, component of the eukaryotic translation initiation factor 3 (eIF-3) complex. The eIF-3 complex interacts with pix.

The protein resides in the cytoplasm. In terms of biological role, component of the eukaryotic translation initiation factor 3 (eIF-3) complex, which is involved in protein synthesis of a specialized repertoire of mRNAs and, together with other initiation factors, stimulates binding of mRNA and methionyl-tRNAi to the 40S ribosome. The eIF-3 complex specifically targets and initiates translation of a subset of mRNAs involved in cell proliferation. The sequence is that of Eukaryotic translation initiation factor 3 subunit I from Drosophila yakuba (Fruit fly).